A 355-amino-acid chain; its full sequence is Uroporphyrinogen decarboxylase (355 aa).

Substrate-binding positions include 27–31 (RQAGR), Phe-46, Asp-77, Tyr-154, Ser-209, and His-327.

It belongs to the uroporphyrinogen decarboxylase family. In terms of assembly, homodimer.

Its subcellular location is the cytoplasm. The catalysed reaction is uroporphyrinogen III + 4 H(+) = coproporphyrinogen III + 4 CO2. It functions in the pathway porphyrin-containing compound metabolism; protoporphyrin-IX biosynthesis; coproporphyrinogen-III from 5-aminolevulinate: step 4/4. Catalyzes the decarboxylation of four acetate groups of uroporphyrinogen-III to yield coproporphyrinogen-III. This chain is Uroporphyrinogen decarboxylase, found in Nitrosomonas europaea (strain ATCC 19718 / CIP 103999 / KCTC 2705 / NBRC 14298).